A 366-amino-acid polypeptide reads, in one-letter code: Uroporphyrinogen decarboxylase (366 aa).

Substrate contacts are provided by residues 28–32 (RQAGR), Asp-78, Tyr-160, Thr-215, and His-333.

The protein belongs to the uroporphyrinogen decarboxylase family. As to quaternary structure, homodimer.

The protein localises to the cytoplasm. It carries out the reaction uroporphyrinogen III + 4 H(+) = coproporphyrinogen III + 4 CO2. It participates in porphyrin-containing compound metabolism; protoporphyrin-IX biosynthesis; coproporphyrinogen-III from 5-aminolevulinate: step 4/4. Functionally, catalyzes the decarboxylation of four acetate groups of uroporphyrinogen-III to yield coproporphyrinogen-III. This is Uroporphyrinogen decarboxylase from Paraburkholderia xenovorans (strain LB400).